The primary structure comprises 178 residues: Actin-related protein 2/3 complex subunit 3 (178 aa).

K29 is covalently cross-linked (Glycyl lysine isopeptide (Lys-Gly) (interchain with G-Cter in ubiquitin)).

This sequence belongs to the ARPC3 family. In terms of assembly, component of the Arp2/3 complex composed of ARP2, ARP3, ARC40/p41-ARC, ARC35/p34-ARC, ARC18/p21-ARC, ARC19/p20-ARC and ARC16/p16-ARC.

It is found in the cytoplasm. Its subcellular location is the cytoskeleton. In terms of biological role, functions as a component of the Arp2/3 complex which is involved in regulation of actin polymerization and together with an activating nucleation-promoting factor (NPF) mediates the formation of branched actin networks. In Saccharomyces cerevisiae (strain ATCC 204508 / S288c) (Baker's yeast), this protein is Actin-related protein 2/3 complex subunit 3 (ARC18).